We begin with the raw amino-acid sequence, 161 residues long: Large ribosomal subunit protein uL11 (161 aa).

It belongs to the universal ribosomal protein uL11 family. Part of the ribosomal stalk of the 50S ribosomal subunit. Interacts with L10 and the large rRNA to form the base of the stalk. L10 forms an elongated spine to which L12 dimers bind in a sequential fashion forming a multimeric L10(L12)X complex.

Functionally, forms part of the ribosomal stalk which helps the ribosome interact with GTP-bound translation factors. This is Large ribosomal subunit protein uL11 from Methanosarcina mazei (strain ATCC BAA-159 / DSM 3647 / Goe1 / Go1 / JCM 11833 / OCM 88) (Methanosarcina frisia).